Here is a 128-residue protein sequence, read N- to C-terminus: MTIDEIIEAIEKLTVSELAELVKKLEDKFGVTAAAPVAVAAAPVAGAAAGAAQEEKTEFDVVLKSFGQNKIQVIKVVREITGLGLKEAKDLVEKAGSPDAVIKSGVSKEEAEEIKKKLEEAGAEVELK.

Homodimer. Part of the 50S ribosomal subunit; present in 6 copies per ribosome. Forms part of the ribosomal stalk which helps the ribosome interact with GTP-bound translation factors. Forms a heptameric L10(L12)2(L12)2(L12)2 complex, where L10 forms an elongated spine to which 3 L12 dimers bind in a sequential fashion.

Its function is as follows. Forms part of the ribosomal stalk which helps the ribosome interact with GTP-bound translation factors. Is thus essential for accurate translation. This is Large ribosomal subunit protein bL12 from Thermotoga maritima (strain ATCC 43589 / DSM 3109 / JCM 10099 / NBRC 100826 / MSB8).